A 139-amino-acid polypeptide reads, in one-letter code: Putative pre-16S rRNA nuclease (139 aa).

Belongs to the YqgF nuclease family.

Its subcellular location is the cytoplasm. Functionally, could be a nuclease involved in processing of the 5'-end of pre-16S rRNA. The protein is Putative pre-16S rRNA nuclease of Proteus mirabilis (strain HI4320).